Here is a 227-residue protein sequence, read N- to C-terminus: 6-phosphogluconolactonase (227 aa).

Belongs to the glucosamine/galactosamine-6-phosphate isomerase family. 6-phosphogluconolactonase subfamily.

The catalysed reaction is 6-phospho-D-glucono-1,5-lactone + H2O = 6-phospho-D-gluconate + H(+). It functions in the pathway carbohydrate degradation; pentose phosphate pathway; D-ribulose 5-phosphate from D-glucose 6-phosphate (oxidative stage): step 2/3. Its function is as follows. Hydrolysis of 6-phosphogluconolactone to 6-phosphogluconate. The polypeptide is 6-phosphogluconolactonase (pgl) (Helicobacter pylori (strain ATCC 700392 / 26695) (Campylobacter pylori)).